The following is a 477-amino-acid chain: Glycogen synthase (477 aa).

Lys15 lines the ADP-alpha-D-glucose pocket.

It belongs to the glycosyltransferase 1 family. Bacterial/plant glycogen synthase subfamily.

It catalyses the reaction [(1-&gt;4)-alpha-D-glucosyl](n) + ADP-alpha-D-glucose = [(1-&gt;4)-alpha-D-glucosyl](n+1) + ADP + H(+). Its pathway is glycan biosynthesis; glycogen biosynthesis. In terms of biological role, synthesizes alpha-1,4-glucan chains using ADP-glucose. This chain is Glycogen synthase, found in Shigella flexneri.